Here is a 126-residue protein sequence, read N- to C-terminus: Glycine cleavage system H protein (126 aa).

A Lipoyl-binding domain is found at 19-100 (DGKIGITDHA…AHAAWMVKVE (82 aa)). The residue at position 60 (Lys60) is an N6-lipoyllysine.

This sequence belongs to the GcvH family. As to quaternary structure, the glycine cleavage system is composed of four proteins: P, T, L and H. (R)-lipoate is required as a cofactor.

The glycine cleavage system catalyzes the degradation of glycine. The H protein shuttles the methylamine group of glycine from the P protein to the T protein. The chain is Glycine cleavage system H protein from Koribacter versatilis (strain Ellin345).